A 429-amino-acid polypeptide reads, in one-letter code: Palmitoyltransferase SWF1 (429 aa).

Residues 1–3 are Lumenal-facing; the sequence is MGT. A helical transmembrane segment spans residues 4–24; it reads IAIIAAVILGISFMTFVAFFG. At 25–79 the chain is on the cytoplasmic side; sequence RLPALRNTPISFLHRLIWIHLPNGILTVDRTLTNGRLTTSLTRLGRHLWYDQHPT. The chain crosses the membrane as a helical span at residues 80-100; that stretch reads ILIFFFLLLSVGEYLYLPVAW. Over 101 to 112 the chain is Lumenal; it reads PHFSFTHKFFGT. The helical transmembrane segment at 113–133 threads the bilayer; the sequence is IAILCPYIFLYLSAYTDPGVI. Topologically, residues 134 to 201 are cytoplasmic; sequence NAKTHVREMA…CVGANNQRWF (68 aa). A DHHC domain is found at 156–206; that stretch reads TSCETCHLLKPARSKHCSICKKCVGRMDHHCIFINNCVGANNQRWFILLLL. The helical transmembrane segment at 202–222 threads the bilayer; it reads ILLLLSTAILTLYGGVLGLVI. Topologically, residues 223–274 are lumenal; the sequence is IRAKIQARFPYWTLMPWWTSTQAWNSGDLDFHRWLLLWSWGLQSGVAMGGVT. Residues 275-295 traverse the membrane as a helical segment; the sequence is LLALLTTPLVWGLLGYHLWLV. The Cytoplasmic segment spans residues 296 to 429; that stretch reads YCGTTTNESM…ERGRNRRRSS (134 aa). Residues 408–421 show a composition bias toward basic and acidic residues; it reads GRSPVDEREFGRER. The disordered stretch occupies residues 408–429; the sequence is GRSPVDEREFGRERGRNRRRSS.

The protein belongs to the DHHC palmitoyltransferase family. SWF1 subfamily.

It is found in the endoplasmic reticulum membrane. The catalysed reaction is L-cysteinyl-[protein] + hexadecanoyl-CoA = S-hexadecanoyl-L-cysteinyl-[protein] + CoA. In terms of biological role, palmitoyltransferase that targets several endosomal SNAREs. Palmitoylates the SNAREs at cysteine residues close to the cytoplasmic end of their transmembrane domain. May have a role in the cellular quality control of transmembrane domain-containing proteins. This Neurospora crassa (strain ATCC 24698 / 74-OR23-1A / CBS 708.71 / DSM 1257 / FGSC 987) protein is Palmitoyltransferase SWF1 (swf-1).